A 264-amino-acid polypeptide reads, in one-letter code: MAPASRLLALWALAAVALPGSGAEGDGGWRPGGPGAVAEEERCTVERRADLTYAEFVQQYAFVRPVILQGLTDNSRFRALCSRDRLLASFGDRVVRLSTANTYSYHKVDLPFQEYVEQLLHPQDPTSLGNDTLYFFGDNNFTEWASLFRHYSPPPFGLLGTAPAYSFGIAGAGSGVPFHWHGPGYSEVIYGRKRWFLYPPEKTPEFHPNKTTLAWLRDTYPALPPSARPLECTIRAGEVLYFPDRWWHATLNLDTSVFISTFLG.

The first 23 residues, 1–23 (MAPASRLLALWALAAVALPGSGA), serve as a signal peptide directing secretion. Residues N130, N140, and N209 are each glycosylated (N-linked (GlcNAc...) asparagine). A JmjC domain is found at 131 to 264 (DTLYFFGDNN…TSVFISTFLG (134 aa)).

As to quaternary structure, oligomer. Dimer. Interacts with PKM; regulates angiogenesis and metabolism. N-glycosylated.

It is found in the endoplasmic reticulum lumen. Its subcellular location is the cytoplasm. Functions as a positive regulator of TNF-induced NF-kappa-B signaling. Regulates angiogenesis and cellular metabolism through interaction with PKM. This Homo sapiens (Human) protein is JmjC domain-containing protein 8.